Here is a 135-residue protein sequence, read N- to C-terminus: Large ribosomal subunit protein bL19 (135 aa).

The protein belongs to the bacterial ribosomal protein bL19 family.

Its function is as follows. This protein is located at the 30S-50S ribosomal subunit interface and may play a role in the structure and function of the aminoacyl-tRNA binding site. This Xanthomonas axonopodis pv. citri (strain 306) protein is Large ribosomal subunit protein bL19.